The following is a 1687-amino-acid chain: Zinc finger protein 142 (1687 aa).

2 disordered regions span residues 1–23 (MTDPLLDSQPASSTGEMDGLCPE) and 83–150 (TLTP…RLEG). Basic and acidic residues predominate over residues 125 to 140 (KEEKSDTQKDSQKAVD). Serine 154 carries the post-translational modification Phosphoserine. 3 consecutive C2H2-type zinc fingers follow at residues 163-185 (HMCPECKRCFKKRTHLVEHLHLH), 219-242 (HHCPLCHYSAVERNALNRHMASMH), and 253-275 (YACPVCREEFRLSQALKEHLKSH). The C2H2-type 4; atypical zinc finger occupies 286 to 311 (LRCFQEGCSYAAPDRKAFIKHLKETH). C2H2-type zinc fingers lie at residues 316–340 (VECRHHSCPMLFATAEAMEAHHKSH), 343–366 (FHCPHCDFACSNKHLFRKHKKQGH), 372–395 (LRCTFCPFATFNPVAYQDHVGKMH), 401–423 (HQCPECNFATAHKRVLIRHMLLH), 429–451 (HKCELCDFTCRDVSYLSKHMLTH), 457–479 (YMCTECGYVTKWKHYLRVHMRKH), 485–507 (YQCNQCSYRCHRADQLSSHKLRH), 512–536 (LMCEVCAFACKRKYELQKHMASQHH), 544–567 (YPCHYCSYQSRHKQAVLSHENCKH), and 573–596 (FHCALCDYRTFSNTTLLFHKRKAH). A Glycyl lysine isopeptide (Lys-Gly) (interchain with G-Cter in SUMO2) cross-link involves residue lysine 594. Disordered stretches follow at residues 613–690 (EPEG…EVEE), 704–798 (LESV…PPLP), 897–935 (KGLPRPDSPIPLQPVLPGTQASEDTESGKPPPASQEAEL), 947–1014 (REPE…SPTE), and 1052–1092 (GRGG…GDGD). A compositionally biased stretch (low complexity) spans 725–739 (PLGLEGPDGLEGPEL). Residues 1061–1075 (TPQTQPDVSPLSNGD) are compositionally biased toward polar residues. Residues 1082-1092 (GSTESSSGDGD) show a composition bias toward low complexity. 15 consecutive C2H2-type zinc fingers follow at residues 1135-1158 (LHCSLCPFTAPAATALRLHQKRRH), 1171-1194 (LQCGDCGFTCKQSRCMQQHRRLKH), 1200-1222 (HQCPFCDFSTTRRYRLEAHQSRH), 1228-1251 (IPCSSCPQTFGTNSKLRLHRLRVH), 1257-1280 (HFCPLCDYSGYLRHDITRHVNSCH), 1286-1309 (FACSQCEAQFSSETALKQHALRRH), 1328-1351 (LHCSRCGLLCPSPASLRGHTRKQH), 1354-1377 (LECGACQEAFPSRLALDEHRRQQH), 1380-1403 (HRCQLCDFAARERVGLVKHYLEQH), 1424-1446 (LHCPFCDFTCRHQLVLDHHVKGH), 1452-1474 (YKCTDCAYSTKNRQKITWHSRIH), 1480-1502 (YHCHLCPYACADPSRLKYHMRIH), 1508-1530 (YLCPECGYKCKWVNQLKYHMTKH), 1536-1559 (YQCPECEYCTNRADALRVHQETRH), and 1565-1587 (FMCEQCGKAFKTRFLLRTHLRKH). Residue lysine 1193 forms a Glycyl lysine isopeptide (Lys-Gly) (interchain with G-Cter in SUMO2) linkage. Lysine 1242 is covalently cross-linked (Glycyl lysine isopeptide (Lys-Gly) (interchain with G-Cter in SUMO2)). Residue lysine 1591 forms a Glycyl lysine isopeptide (Lys-Gly) (interchain with G-Cter in SUMO2) linkage. 2 consecutive C2H2-type zinc fingers follow at residues 1593 to 1615 (YVCNVCHRAFRWAAGLRHHALTH) and 1621 to 1643 (FFCRLCNYKAKQKFQVVKHVRRH). The tract at residues 1638–1687 (KHVRRHHPDQADPNQGVGKDPTTPTVHLHDVQLEDPSPPAPAAPHTGPEG) is disordered.

The protein belongs to the krueppel C2H2-type zinc-finger protein family.

Its subcellular location is the nucleus. In terms of biological role, may be involved in transcriptional regulation. This Homo sapiens (Human) protein is Zinc finger protein 142.